A 631-amino-acid chain; its full sequence is Phosphomethylpyrimidine synthase (631 aa).

Substrate-binding positions include asparagine 239, methionine 268, tyrosine 297, histidine 333, serine 353–glycine 355, aspartate 394–arginine 397, and glutamate 433. Histidine 437 lines the Zn(2+) pocket. Tyrosine 460 is a binding site for substrate. Histidine 501 lines the Zn(2+) pocket. The [4Fe-4S] cluster site is built by cysteine 581, cysteine 584, and cysteine 589.

It belongs to the ThiC family. In terms of assembly, homodimer. It depends on [4Fe-4S] cluster as a cofactor.

It carries out the reaction 5-amino-1-(5-phospho-beta-D-ribosyl)imidazole + S-adenosyl-L-methionine = 4-amino-2-methyl-5-(phosphooxymethyl)pyrimidine + CO + 5'-deoxyadenosine + formate + L-methionine + 3 H(+). Its pathway is cofactor biosynthesis; thiamine diphosphate biosynthesis. Its function is as follows. Catalyzes the synthesis of the hydroxymethylpyrimidine phosphate (HMP-P) moiety of thiamine from aminoimidazole ribotide (AIR) in a radical S-adenosyl-L-methionine (SAM)-dependent reaction. This chain is Phosphomethylpyrimidine synthase, found in Shigella boydii serotype 4 (strain Sb227).